We begin with the raw amino-acid sequence, 328 residues long: Cytochrome c biogenesis protein CcsA (328 aa).

Helical transmembrane passes span 13 to 33, 46 to 66, 73 to 93, 101 to 121, 146 to 166, 234 to 254, 263 to 283, and 295 to 315; these read ISFSVISIVLTIYFLTLLVNL, GIVITFFGITGLLFTRWIYSG, LYESLIFLSWAFSIIHMVSYF, LNAITAPSAIFIQGFATSGLL, MILGYGALLCGSLLSMALLVI, IISLGFIFLTVGILSGAVWAN, WDPKETWAFITWTIFAIYLHI, and AIVASIGFILIWICYFGVNLL.

Belongs to the CcmF/CycK/Ccl1/NrfE/CcsA family. May interact with Ccs1.

The protein resides in the plastid. Its subcellular location is the chloroplast thylakoid membrane. In terms of biological role, required during biogenesis of c-type cytochromes (cytochrome c6 and cytochrome f) at the step of heme attachment. This is Cytochrome c biogenesis protein CcsA from Nasturtium officinale (Watercress).